A 302-amino-acid polypeptide reads, in one-letter code: MLDRQQTGIVFNVQKFSVHDGEGIRTLVFLKGCPLHCPWCSNPESQRREPERAYNPTRCLTAAVCGRCAKACPTGAVSIVGGLVCFDRSKCTGCNACVRACPSGAQTVYGETQSVDQILSRVEEDGVFYTRSGGGLTLSGGEALAQPDFALALLREAKKRHIHTTIETCGHYPTEVLDQACRVLDALIFDIKCLDSARHKKATGVGSELILKNIGHVFEHFPDLPVLIRTPVIPGFNDTEEDILGIREMIPRKANIRYEALTYHRMGQPKYGYLGRRYELEGVKADEAFMKRLNIMLKSYEK.

The Radical SAM core domain maps to 19 to 301 (HDGEGIRTLV…RLNIMLKSYE (283 aa)). Residues C33, C37, C40, C59, C65, C68, C72, C91, C94, C97, and C101 each contribute to the [4Fe-4S] cluster site. Residue 39–41 (WCS) coordinates S-adenosyl-L-methionine. 2 consecutive 4Fe-4S ferredoxin-type domains span residues 50 to 81 (PERA…SIVG) and 82 to 111 (GLVC…VYGE). S-adenosyl-L-methionine is bound by residues G141 and 190–192 (DIK).

The protein belongs to the organic radical-activating enzymes family. Requires [4Fe-4S] cluster as cofactor.

The enzyme catalyses glycyl-[protein] + reduced [flavodoxin] + S-adenosyl-L-methionine = glycin-2-yl radical-[protein] + semiquinone [flavodoxin] + 5'-deoxyadenosine + L-methionine + H(+). It functions in the pathway organosulfur degradation; alkanesulfonate degradation. Involved in the degradation of the organosulfur compound 2(S)-dihydroxypropanesulfonate (DHPS). Catalyzes activation of the (2S)-3-sulfopropanediol sulfolyase HpsG under anaerobic conditions by generation of an organic free radical on a glycine residue. The chain is (2S)-3-sulfopropanediol sulfolyase activating enzyme from Bilophila wadsworthia (strain 3_1_6).